The chain runs to 1003 residues: Cation-transporting ATPase HMA5 (1003 aa).

Positions 6–25 (LSAVAGGGRPAAAGGGGDEM) are disordered. Residues 10–22 (AGGGRPAAAGGGG) show a composition bias toward gly residues. HMA domains are found at residues 51-117 (EEAH…FDAE), 133-199 (LSAQ…FEAA), and 207-273 (DKIL…NGRL). Residues Cys-62, Cys-65, Cys-144, and Cys-147 each coordinate Cu cation. Transmembrane regions (helical) follow at residues 302 to 322 (SLFL…IPFI), 331 to 351 (GPFH…QFVV), 372 to 392 (VLVV…LLYG), 396 to 416 (GFHP…VLFG), 562 to 582 (IFVP…FLCG), 599 to 619 (FVFS…CALG), 938 to 958 (FFAM…LFPF), and 966 to 986 (WLAG…SLLL).

This sequence belongs to the cation transport ATPase (P-type) (TC 3.A.3) family. Type IB subfamily. As to expression, expressed in root vascular cylinder, vascular bundles and mesophyll cells of leaf blades, and anther walls and microspores of stamens.

It is found in the cell membrane. Metal efflux transporter that may play a role in detoxification of heavy metals, such as zinc, copper, lead and cadmium, especially in the shoots. This chain is Cation-transporting ATPase HMA5, found in Oryza sativa subsp. japonica (Rice).